The following is a 451-amino-acid chain: DNA double-strand break repair protein Mre11 (451 aa).

Mn(2+)-binding residues include Asp8, His10, Asp49, and Asn84. Catalysis depends on His85, which acts as the Proton donor. Residues His168, His198, and His200 each coordinate Mn(2+). A disordered region spans residues 374–451; the sequence is REDNPPDLGD…GRPSLDRWIG (78 aa). A compositionally biased stretch (acidic residues) spans 396–416; sequence GSEESSEEPEESDGEEVGLEV.

This sequence belongs to the MRE11/RAD32 family. As to quaternary structure, homodimer. Forms a heterotetramer composed of two Mre11 subunits and two Rad50 subunits. Mn(2+) serves as cofactor.

Its activity is regulated as follows. Nuclease activity is regulated by Rad50. Part of the Rad50/Mre11 complex, which is involved in the early steps of DNA double-strand break (DSB) repair. The complex may facilitate opening of the processed DNA ends to aid in the recruitment of HerA and NurA. Mre11 binds to DSB ends and has both double-stranded 3'-5' exonuclease activity and single-stranded endonuclease activity. This is DNA double-strand break repair protein Mre11 from Methanopyrus kandleri (strain AV19 / DSM 6324 / JCM 9639 / NBRC 100938).